The primary structure comprises 591 residues: CTP synthase 1-B (591 aa).

The 255-residue stretch at 300–554 folds into the Glutamine amidotransferase type-1 domain; the sequence is SIALVGKYTK…LASVGRLSQY (255 aa). Catalysis depends on for GATase activity residues C399, H526, and E528. Over residues 562–572 the composition is skewed to basic and acidic residues; it reads SPRDTYSDRSE. The interval 562–581 is disordered; the sequence is SPRDTYSDRSENSSPDAEIA.

This sequence belongs to the CTP synthase family.

It catalyses the reaction UTP + L-glutamine + ATP + H2O = CTP + L-glutamate + ADP + phosphate + 2 H(+). It functions in the pathway pyrimidine metabolism; CTP biosynthesis via de novo pathway; CTP from UDP: step 2/2. In terms of biological role, this enzyme is involved in the de novo synthesis of CTP, a precursor of DNA, RNA and phospholipids. Catalyzes the ATP-dependent amination of UTP to CTP with either L-glutamine or ammonia as a source of nitrogen. The protein is CTP synthase 1-B (ctps1-b) of Xenopus laevis (African clawed frog).